A 209-amino-acid chain; its full sequence is Abscisic acid receptor PYL5 (209 aa).

Residues 44–196 (HAPGEHQCSS…NLTSLAEVSE (153 aa)) form an START-like region. Cys51 and Cys177 are oxidised to a cystine. Residues Lys80, 109-114 (ATTSTE), 136-142 (RLRNYSS), and Glu161 each bind abscisate. The Gate loop motif lies at 105 to 109 (TGLPA). Positions 135–137 (HRL) match the Latch loop motif.

This sequence belongs to the PYR/PYL/RCAR abscisic acid intracellular receptor family. In terms of assembly, monomer. Interacts with PP2C30. Binding to PP2C30 is dependent on the presence of abscisic acid (ABA). Interacts with PP2C51. Binding to PP2C51 is dependent on the presence of ABA. Interacts with PP2C50. Binding to PP2C50 is dependent on the presence of ABA. Interacts with PP2C53. Expressed in leaf sheaths and leaf blades. Expressed at low levels in roots, flowers and seeds.

The protein localises to the nucleus. It is found in the cytoplasm. Its subcellular location is the cytosol. In terms of biological role, intracellular abscisic acid (ABA) receptor that functions as a positive regulator of ABA signaling pathway. Together with ABI5, PP2C30 and SAPK2, is part of an ABA signaling unit that modulates seed germination and early seedling growth. Acts as a positive regulator of abiotic stress-responsive gene expression. Inhibits the protein phosphatases PP2C06 and PP2C09 when activated by ABA. In Oryza sativa subsp. japonica (Rice), this protein is Abscisic acid receptor PYL5.